Here is a 55-residue protein sequence, read N- to C-terminus: uncharacterized protein (55 aa).

A helical transmembrane segment spans residues 7–24 (VALVGAVLATLTACTGHI).

The protein resides in the membrane. This is an uncharacterized protein from Escherichia coli O157:H7.